Here is a 288-residue protein sequence, read N- to C-terminus: Purine nucleoside phosphorylase (288 aa).

Residue 65-66 (RN) coordinates phosphate. Residue Met-201 coordinates substrate. Phosphate is bound at residue Thr-202.

It belongs to the PNP/MTAP phosphorylase family. MTAP subfamily. As to quaternary structure, homotrimer.

The protein resides in the cytoplasm. It is found in the nucleus. The catalysed reaction is a purine D-ribonucleoside + phosphate = a purine nucleobase + alpha-D-ribose 1-phosphate. The protein operates within purine metabolism; purine nucleoside salvage. Purine nucleoside phosphorylase involved in purine salvage. The polypeptide is Purine nucleoside phosphorylase (Drosophila pseudoobscura pseudoobscura (Fruit fly)).